A 346-amino-acid polypeptide reads, in one-letter code: Fe(3+) ions import ATP-binding protein FbpC 3 (346 aa).

Positions 5–235 constitute an ABC transporter domain; it reads LEVDGVDKSF…PIDVATAEFI (231 aa). Residue 37–44 coordinates ATP; sequence GPSGCGKT.

It belongs to the ABC transporter superfamily. Fe(3+) ion importer (TC 3.A.1.10) family. The complex is composed of two ATP-binding proteins (FbpC), two transmembrane proteins (FbpB) and a solute-binding protein (FbpA).

The protein resides in the cell membrane. The enzyme catalyses Fe(3+)(out) + ATP + H2O = Fe(3+)(in) + ADP + phosphate + H(+). In terms of biological role, part of the ABC transporter complex FbpABC involved in Fe(3+) ions import. Responsible for energy coupling to the transport system. This Rhodococcus jostii (strain RHA1) protein is Fe(3+) ions import ATP-binding protein FbpC 3.